The sequence spans 347 residues: Protein RecA (347 aa).

65 to 72 (GPESSGKT) provides a ligand contact to ATP.

It belongs to the RecA family.

It is found in the cytoplasm. Its function is as follows. Can catalyze the hydrolysis of ATP in the presence of single-stranded DNA, the ATP-dependent uptake of single-stranded DNA by duplex DNA, and the ATP-dependent hybridization of homologous single-stranded DNAs. It interacts with LexA causing its activation and leading to its autocatalytic cleavage. This Marinobacter nauticus (strain ATCC 700491 / DSM 11845 / VT8) (Marinobacter aquaeolei) protein is Protein RecA.